The chain runs to 113 residues: Large ribosomal subunit protein bL17 (113 aa).

The protein belongs to the bacterial ribosomal protein bL17 family. Part of the 50S ribosomal subunit. Contacts protein L32.

In Clostridium botulinum (strain Loch Maree / Type A3), this protein is Large ribosomal subunit protein bL17.